An 89-amino-acid polypeptide reads, in one-letter code: Small ribosomal subunit protein uS15 (89 aa).

The protein belongs to the universal ribosomal protein uS15 family. Part of the 30S ribosomal subunit. Forms a bridge to the 50S subunit in the 70S ribosome, contacting the 23S rRNA.

Functionally, one of the primary rRNA binding proteins, it binds directly to 16S rRNA where it helps nucleate assembly of the platform of the 30S subunit by binding and bridging several RNA helices of the 16S rRNA. Forms an intersubunit bridge (bridge B4) with the 23S rRNA of the 50S subunit in the ribosome. The chain is Small ribosomal subunit protein uS15 from Bradyrhizobium sp. (strain BTAi1 / ATCC BAA-1182).